A 265-amino-acid polypeptide reads, in one-letter code: 3-methyl-2-oxobutanoate hydroxymethyltransferase (265 aa).

The Mg(2+) site is built by D43 and D82. 3-methyl-2-oxobutanoate-binding positions include D43–S44, D82, and K111. Residue E113 coordinates Mg(2+). The active-site Proton acceptor is E180.

The protein belongs to the PanB family. As to quaternary structure, homodecamer; pentamer of dimers. It depends on Mg(2+) as a cofactor.

It is found in the cytoplasm. It carries out the reaction 3-methyl-2-oxobutanoate + (6R)-5,10-methylene-5,6,7,8-tetrahydrofolate + H2O = 2-dehydropantoate + (6S)-5,6,7,8-tetrahydrofolate. The protein operates within cofactor biosynthesis; (R)-pantothenate biosynthesis; (R)-pantoate from 3-methyl-2-oxobutanoate: step 1/2. In terms of biological role, catalyzes the reversible reaction in which hydroxymethyl group from 5,10-methylenetetrahydrofolate is transferred onto alpha-ketoisovalerate to form ketopantoate. The protein is 3-methyl-2-oxobutanoate hydroxymethyltransferase of Francisella tularensis subsp. mediasiatica (strain FSC147).